Reading from the N-terminus, the 122-residue chain is Large ribosomal subunit protein uL14c (122 aa).

Belongs to the universal ribosomal protein uL14 family. In terms of assembly, part of the 50S ribosomal subunit.

It is found in the plastid. The protein localises to the chloroplast. Binds to 23S rRNA. This Buxus microphylla (Littleleaf boxwood) protein is Large ribosomal subunit protein uL14c.